Consider the following 172-residue polypeptide: Capsid protein (172 aa).

The interval 1 to 26 is disordered; that stretch reads MASKWNWSGTKGRRTPRRPYGRPYKS. Over residues 11–20 the composition is skewed to basic residues; sequence KGRRTPRRPY.

Belongs to the nanoviridae capsid protein family.

It is found in the virion. This is Capsid protein (DNA-S) from Faba bean necrotic yellows virus (isolate Syrian SV292-88) (FBNYV).